Here is a 137-residue protein sequence, read N- to C-terminus: Ribosome-binding factor A (137 aa).

Belongs to the RbfA family. As to quaternary structure, monomer. Binds 30S ribosomal subunits, but not 50S ribosomal subunits or 70S ribosomes.

Its subcellular location is the cytoplasm. Functionally, one of several proteins that assist in the late maturation steps of the functional core of the 30S ribosomal subunit. Associates with free 30S ribosomal subunits (but not with 30S subunits that are part of 70S ribosomes or polysomes). Required for efficient processing of 16S rRNA. May interact with the 5'-terminal helix region of 16S rRNA. This chain is Ribosome-binding factor A, found in Allorhizobium ampelinum (strain ATCC BAA-846 / DSM 112012 / S4) (Agrobacterium vitis (strain S4)).